Here is a 96-residue protein sequence, read N- to C-terminus: Large ribosomal subunit protein eL43 (96 aa).

A C4-type zinc finger spans residues 41–62 (CPVCGFMKLKRISTSIWECKKC).

It belongs to the eukaryotic ribosomal protein eL43 family. Requires Zn(2+) as cofactor.

This is Large ribosomal subunit protein eL43 from Methanococcus aeolicus (strain ATCC BAA-1280 / DSM 17508 / OCM 812 / Nankai-3).